Consider the following 278-residue polypeptide: Potassium/proton antiporter CemA (278 aa).

4 helical membrane passes run 61–81 (LIVL…FIIG), 155–175 (AIKN…LIVL), 203–223 (IILF…EVVI), and 238–258 (FIFL…KYWI).

Belongs to the CemA family.

The protein localises to the plastid. The protein resides in the chloroplast inner membrane. The catalysed reaction is K(+)(in) + H(+)(out) = K(+)(out) + H(+)(in). Contributes to K(+)/H(+) antiport activity by supporting proton efflux to control proton extrusion and homeostasis in chloroplasts in a light-dependent manner to modulate photosynthesis. Prevents excessive induction of non-photochemical quenching (NPQ) under continuous-light conditions. Indirectly promotes efficient inorganic carbon uptake into chloroplasts. In Cyanidium caldarium (Red alga), this protein is Potassium/proton antiporter CemA.